Reading from the N-terminus, the 400-residue chain is CinA-like protein (400 aa).

Belongs to the CinA family.

This Escherichia coli (strain K12 / MC4100 / BW2952) protein is CinA-like protein.